Reading from the N-terminus, the 336-residue chain is Malate dehydrogenase, cytoplasmic (336 aa).

NAD(+)-binding positions include 11-17 (GAAGQIG) and Asp42. 2 residues coordinate substrate: Arg92 and Arg98. Residues Asn105, Gln112, and 129–131 (VGN) contribute to the NAD(+) site. Substrate contacts are provided by Asn131 and Arg163. His188 acts as the Proton acceptor in catalysis.

It belongs to the LDH/MDH superfamily. MDH type 2 family. Homodimer.

It is found in the cytoplasm. It catalyses the reaction (S)-malate + NAD(+) = oxaloacetate + NADH + H(+). Catalyzes the reversible conversion of (S)-malate to oxaloacetate in the cytoplasm where oxaloacetate is used for gluconeogenesis. This Caenorhabditis elegans protein is Malate dehydrogenase, cytoplasmic.